Consider the following 337-residue polypeptide: Phosphatidylglycerophosphate phosphatase PTPMT1 (337 aa).

Residues Met-1–Asp-20 are disordered. Substrate is bound by residues Tyr-55 and Asp-133. The Tyrosine-protein phosphatase domain maps to Trp-73 to Leu-220. The active-site Phosphocysteine intermediate is Cys-164. A Glucan phosphatase signature motif CXAGXGR motif is present at residues Cys-164–Arg-170. Lys-165–Arg-170 is a substrate binding site.

It belongs to the protein-tyrosine phosphatase family. Non-receptor class dual specificity subfamily. In terms of tissue distribution, expressed in stems, roots, flowers, mature seeds and leaves.

The catalysed reaction is O-phospho-L-seryl-[protein] + H2O = L-seryl-[protein] + phosphate. The enzyme catalyses O-phospho-L-threonyl-[protein] + H2O = L-threonyl-[protein] + phosphate. It carries out the reaction O-phospho-L-tyrosyl-[protein] + H2O = L-tyrosyl-[protein] + phosphate. It catalyses the reaction a 1,2-diacyl-sn-glycero-3-phospho-(1'-sn-glycero-3'-phosphate) + H2O = a 1,2-diacyl-sn-glycero-3-phospho-(1'-sn-glycerol) + phosphate. Its pathway is phospholipid metabolism; phosphatidylglycerol biosynthesis; phosphatidylglycerol from CDP-diacylglycerol: step 2/2. Exhibits phosphatidylglycerophosphate phosphatase activity. Involved in root growth and columella cells organization. May possess protein phosphatase activity. The protein is Phosphatidylglycerophosphate phosphatase PTPMT1 of Arabidopsis thaliana (Mouse-ear cress).